The sequence spans 484 residues: Phosphomevalonate kinase erg8 (484 aa).

Residues 54-77 (REAASGSAHGRSDTPQAEGNVHGD) are disordered. 184–194 (AHKTGLGSSAA) provides a ligand contact to ATP.

The protein belongs to the GHMP kinase family. Mevalonate kinase subfamily.

It catalyses the reaction (R)-5-phosphomevalonate + ATP = (R)-5-diphosphomevalonate + ADP. The protein operates within isoprenoid biosynthesis; isopentenyl diphosphate biosynthesis via mevalonate pathway; isopentenyl diphosphate from (R)-mevalonate: step 2/3. Its function is as follows. Phosphomevalonate kinase; part of the second module of ergosterol biosynthesis pathway that includes the middle steps of the pathway. Erg8 converts 5-phosphomevalonate to 5-diphosphomevalonate. The second module is carried out in the vacuole and involves the formation of farnesyl diphosphate, which is also an important intermediate in the biosynthesis of ubiquinone, dolichol, heme and prenylated proteins. Activity by the mevalonate kinase erg12 (AFUA_4G07780) first converts mevalonate into 5-phosphomevalonate. 5-phosphomevalonate is then further converted to 5-diphosphomevalonate by the phosphomevalonate kinase erg8 (AFUA_5G10680). The diphosphomevalonate decarboxylase mvd1 (AFUA_4G07130) then produces isopentenyl diphosphate. The isopentenyl-diphosphate delta-isomerase idi1 (AFUA_6G11160) then catalyzes the 1,3-allylic rearrangement of the homoallylic substrate isopentenyl (IPP) to its highly electrophilic allylic isomer, dimethylallyl diphosphate (DMAPP). Finally the farnesyl diphosphate synthase erg20 (AFUA_5G02450) catalyzes the sequential condensation of isopentenyl pyrophosphate with dimethylallyl pyrophosphate, and then with the resultant geranylpyrophosphate to the ultimate product farnesyl pyrophosphate. In Aspergillus fumigatus (strain ATCC MYA-4609 / CBS 101355 / FGSC A1100 / Af293) (Neosartorya fumigata), this protein is Phosphomevalonate kinase erg8.